Consider the following 59-residue polypeptide: Gallinacin-14 (59 aa).

The signal sequence occupies residues 1–18; sequence MGIFLLFLVLLAVPQAAP. Disulfide bonds link C25/C54, C32/C47, and C37/C55.

It belongs to the beta-defensin family.

It is found in the secreted. Its subcellular location is the cytoplasmic granule. In terms of biological role, has bactericidal activity. The sequence is that of Gallinacin-14 (GAL14) from Gallus gallus (Chicken).